Here is a 700-residue protein sequence, read N- to C-terminus: Sex comb on midleg-like protein 2 (700 aa).

Residues 1-33 form a disordered region; sequence MGQTVNEDSMDVKKENQEKTPQSSTSSVQRDDF. Residues 19 to 28 show a composition bias toward polar residues; it reads KTPQSSTSSV. 2 MBT repeats span residues 33 to 131 and 139 to 240; these read FHWE…LQPP and SSWP…LQPP. Polar residues predominate over residues 253-281; the sequence is TESSPSEASQHSMQSPQKTTLILPTQQVR. Disordered stretches follow at residues 253–320 and 466–550; these read TESS…EKPL and PFSS…SSLN. Phosphoserine occurs at positions 256, 261, 267, 299, and 300. Thr305 is subject to Phosphothreonine. Residues 476-495 show a composition bias toward basic and acidic residues; sequence SSAEHDKNQSAKEDVTERQS. The residue at position 499 (Ser499) is a Phosphoserine. Thr503 bears the Phosphothreonine mark. Ser511 carries the post-translational modification Phosphoserine. A Glycyl lysine isopeptide (Lys-Gly) (interchain with G-Cter in SUMO2) cross-link involves residue Lys518. Position 522 is a phosphoserine (Ser522). Over residues 535-545 the composition is skewed to basic and acidic residues; it reads PKEENLSEDSK. A Glycyl lysine isopeptide (Lys-Gly) (interchain with G-Cter in SUMO2) cross-link involves residue Lys536. 4 positions are modified to phosphoserine: Ser570, Ser583, Ser590, and Ser594. The span at 575-584 shows a compositional bias: polar residues; it reads RSVPGTTSSP. Positions 575 to 594 are disordered; the sequence is RSVPGTTSSPLVGDISPKSS. Glycyl lysine isopeptide (Lys-Gly) (interchain with G-Cter in SUMO2) cross-links involve residues Lys599 and Lys605. In terms of domain architecture, SAM spans 631–700; the sequence is WSVDEVIQFM…IEKLKEGKYS (70 aa).

This sequence belongs to the SCM family. As to expression, highly expressed in placenta, thymus and testis. Detected at lower levels in brain, liver, skeletal muscle, pancreas and ovary.

It localises to the nucleus. In terms of biological role, putative Polycomb group (PcG) protein. PcG proteins act by forming multiprotein complexes, which are required to maintain the transcriptionally repressive state of homeotic genes throughout development. The protein is Sex comb on midleg-like protein 2 (SCML2) of Homo sapiens (Human).